The following is a 448-amino-acid chain: MKGFIDDANYSVGLLDEGTNLGNVIDNYVYEHTLTGKNAFFVGDLGKIVKKHSQWQNVVAQIKPFYMVKCNSTPAVLEILAALGTGFACSTKNEMALVQELGVSPENIIYTSPCKQASQIKYAAKVGVNIMTCDNEVELKKIARNHPNAKVLLHIATEDNIGGEDGNMKFGTTLKNCRHLLECAKELDVQIIGVKFHISSACKEYQVYVHALSDARCVFDMAGEFGFTMNMLDIGGGFTGTEIQLEEVNHVISPLLDIYFPEGSGIQIISEPGSYYVSSAFTLAVNIIAKKVVENDKLSSGVEKNGSDEPAFVYYMNDGVYGSFASKLSEDLNTVPEVHKKYKEDEPLFTSSLWGPSCDELDQIVESCLLPELSVGDWLIFDNMGADSLHGPSAFSDTQRPAIYFMMSLSDWYEMQDAGITSDAMMKNFFFAPSCIQLSQEDNFSTEA.

Belongs to the Orn/Lys/Arg decarboxylase class-II family. ODC antizyme inhibitor subfamily. Monomer. Interacts with OAZ1 and OAZ3; this interaction disrupts the interaction between the antizyme and ODC1. In terms of processing, ubiquitinated, leading to its proteasomal degradation; a process that is reduced in presence of antizyme OAZ1. As to expression, expressed in various tissues including liver, heart and kidney.

The protein resides in the nucleus. Antizyme inhibitor (AZI) protein that positively regulates ornithine decarboxylase (ODC) activity and polyamine uptake. AZI is an enzymatically inactive ODC homolog that counteracts the negative effect of ODC antizymes (AZs) OAZ1, OAZ2 and OAZ3 on ODC activity by competing with ODC for antizyme-binding. Inhibits antizyme-dependent ODC degradation and releases ODC monomers from their inactive complex with antizymes, leading to formation of the catalytically active ODC homodimer and restoring polyamine production. The chain is Antizyme inhibitor 1 (Azin1) from Rattus norvegicus (Rat).